The following is a 629-amino-acid chain: tRNA uridine 5-carboxymethylaminomethyl modification enzyme MnmG (629 aa).

Residue 13–18 (GGGHAG) coordinates FAD. NAD(+) is bound at residue 273–287 (GPRYCPSIEDKITRF).

This sequence belongs to the MnmG family. In terms of assembly, homodimer. Heterotetramer of two MnmE and two MnmG subunits. FAD is required as a cofactor.

The protein localises to the cytoplasm. In terms of biological role, NAD-binding protein involved in the addition of a carboxymethylaminomethyl (cmnm) group at the wobble position (U34) of certain tRNAs, forming tRNA-cmnm(5)s(2)U34. In Aeromonas hydrophila subsp. hydrophila (strain ATCC 7966 / DSM 30187 / BCRC 13018 / CCUG 14551 / JCM 1027 / KCTC 2358 / NCIMB 9240 / NCTC 8049), this protein is tRNA uridine 5-carboxymethylaminomethyl modification enzyme MnmG.